Here is a 657-residue protein sequence, read N- to C-terminus: UvrABC system protein B (657 aa).

In terms of domain architecture, Helicase ATP-binding spans 25 to 182 (KSIKQGNEFQ…KKLIEIQYER (158 aa)). 38–45 (GVTGSGKT) serves as a coordination point for ATP. The Beta-hairpin signature appears at 91–114 (YYDYYQPEAYVPQTDTFIEKDASI). Positions 429-595 (QIDDLYTEIQ…TINKEVRELI (167 aa)) constitute a Helicase C-terminal domain. The UVR domain maps to 621–656 (KKLIKEYTDEMKLAAKNLQFERAAQLRDKIEELKGK).

Belongs to the UvrB family. Forms a heterotetramer with UvrA during the search for lesions. Interacts with UvrC in an incision complex.

The protein localises to the cytoplasm. The UvrABC repair system catalyzes the recognition and processing of DNA lesions. A damage recognition complex composed of 2 UvrA and 2 UvrB subunits scans DNA for abnormalities. Upon binding of the UvrA(2)B(2) complex to a putative damaged site, the DNA wraps around one UvrB monomer. DNA wrap is dependent on ATP binding by UvrB and probably causes local melting of the DNA helix, facilitating insertion of UvrB beta-hairpin between the DNA strands. Then UvrB probes one DNA strand for the presence of a lesion. If a lesion is found the UvrA subunits dissociate and the UvrB-DNA preincision complex is formed. This complex is subsequently bound by UvrC and the second UvrB is released. If no lesion is found, the DNA wraps around the other UvrB subunit that will check the other stand for damage. The polypeptide is UvrABC system protein B (Clostridium botulinum (strain Eklund 17B / Type B)).